Consider the following 1093-residue polypeptide: Regulator of nonsense transcripts 1 homolog (1093 aa).

The segment at 42–79 (YGVYGGRGPRGNGRRRHDDDDNETEVLDDDDDESLASV) is disordered. Positions 61 to 75 (DDNETEVLDDDDDES) are enriched in acidic residues. One can recognise a Upf1 CH-rich domain in the interval 95-252 (EKELPPHACA…AKLEEMWKEA (158 aa)). Zn(2+) contacts are provided by Cys-103, Cys-106, Cys-117, Cys-120, Cys-125, His-135, His-139, His-145, Cys-163, Cys-166, Cys-189, and Cys-193. A C3H region spans residues 103–135 (CAYCGIHSPSSVVKCLTCNKWFCSAKGSAFSSH). The segment at 117-145 (CLTCNKWFCSAKGSAFSSHIVNHLVRARH) is CC/SHH/C. The segment at 163–193 (CYNCGTKNVFILGFIPAKSDTVVVLLCRQPC) is C4. Residues Gln-460, 480-484 (GTGKT), Gln-650, Tyr-687, and Glu-818 each bind ATP.

Belongs to the DNA2/NAM7 helicase family.

It is found in the cytoplasm. The enzyme catalyses ATP + H2O = ADP + phosphate + H(+). In terms of biological role, RNA-dependent helicase required for nonsense-mediated decay (NMD) of aberrant mRNAs containing premature stop codons and modulates the expression level of normal mRNAs. Also capable of unwinding double-stranded DNA and translocating on single-stranded DNA. In Neurospora crassa (strain ATCC 24698 / 74-OR23-1A / CBS 708.71 / DSM 1257 / FGSC 987), this protein is Regulator of nonsense transcripts 1 homolog.